Reading from the N-terminus, the 270-residue chain is Flavin-dependent thymidylate synthase (270 aa).

Residues 13–218 (GFVRLVDQMG…PLAWAAFEEH (206 aa)) enclose the ThyX domain. FAD-binding positions include Ser-59, 82–84 (RHR), and Glu-90. Residues 79-82 (QWFR), 90-94 (EISGR), and Arg-157 each bind dUMP. The ThyX motif signature appears at 82 to 92 (RHRTASVNEIS). FAD-binding positions include 173 to 175 (DLH) and His-179. Arg-184 is a dUMP binding site. The Involved in ionization of N3 of dUMP, leading to its activation role is filled by Arg-184.

The protein belongs to the thymidylate synthase ThyX family. In terms of assembly, homotetramer. The cofactor is FAD.

It carries out the reaction dUMP + (6R)-5,10-methylene-5,6,7,8-tetrahydrofolate + NADPH + H(+) = dTMP + (6S)-5,6,7,8-tetrahydrofolate + NADP(+). It participates in pyrimidine metabolism; dTTP biosynthesis. Its function is as follows. Catalyzes the reductive methylation of 2'-deoxyuridine-5'-monophosphate (dUMP) to 2'-deoxythymidine-5'-monophosphate (dTMP) while utilizing 5,10-methylenetetrahydrofolate (mTHF) as the methyl donor, and NADPH and FADH(2) as the reductant. The sequence is that of Flavin-dependent thymidylate synthase from Thermus thermophilus (strain ATCC 27634 / DSM 579 / HB8).